The chain runs to 500 residues: Glycerol kinase (500 aa).

ADP is bound at residue Thr13. Residues Thr13, Thr14, and Ser15 each coordinate ATP. Position 13 (Thr13) interacts with sn-glycerol 3-phosphate. Arg17 is an ADP binding site. Sn-glycerol 3-phosphate contacts are provided by Arg83, Glu84, Tyr135, and Asp245. 5 residues coordinate glycerol: Arg83, Glu84, Tyr135, Asp245, and Gln246. The ADP site is built by Thr267 and Gly310. ATP is bound by residues Thr267, Gly310, Gln314, and Gly411. ADP contacts are provided by Gly411 and Asn415.

The protein belongs to the FGGY kinase family. In terms of assembly, homotetramer and homodimer (in equilibrium).

The enzyme catalyses glycerol + ATP = sn-glycerol 3-phosphate + ADP + H(+). It participates in polyol metabolism; glycerol degradation via glycerol kinase pathway; sn-glycerol 3-phosphate from glycerol: step 1/1. With respect to regulation, activated by phosphorylation and inhibited by fructose 1,6-bisphosphate (FBP). Key enzyme in the regulation of glycerol uptake and metabolism. Catalyzes the phosphorylation of glycerol to yield sn-glycerol 3-phosphate. The polypeptide is Glycerol kinase (Lactobacillus acidophilus (strain ATCC 700396 / NCK56 / N2 / NCFM)).